A 243-amino-acid polypeptide reads, in one-letter code: 35 kDa gas vesicle protein (243 aa).

Belongs to the gas vesicle GvpC family.

The protein localises to the gas vesicle shell. In terms of biological role, may confer stability to the gas vesicle shells. Gas vesicles are small, hollow, gas filled protein structures that are found in several microbial planktonic microorganisms. They allow the positioning of the organism at the favorable depth for growth. The protein is 35 kDa gas vesicle protein of Dactylococcopsis salina (strain PCC 8305) (Myxobactron salinum).